Consider the following 107-residue polypeptide: MEDFGFTTALRSESVYIVFRFISSSSLSYNTLSSAFIRLDWIKTPRHRAASRALGIQSNGQICTACPHLSALFGFLSVASCFPSNKDDGLHTRIYFDLEFQPDSAVF.

It localises to the mitochondrion. This is an uncharacterized protein from Arabidopsis thaliana (Mouse-ear cress).